The chain runs to 311 residues: VQ motif-containing protein 9 (311 aa).

Low complexity predominate over residues 1–27 (MDKSCNSSGDSSAVSASATSSTGNNTT). Residues 1–78 (MDKSCNSSGD…QINQGNLHQH (78 aa)) are disordered. The VQ motif lies at 90–99 (FRDVVQKLTG). Disordered stretches follow at residues 103 to 125 (HERISAPPQQPIHHPKPQQSSRL), 228 to 266 (QQENAPPSQHNSFPPPHPPPPSSAVSQTVPTSIPAPPLF), and 290 to 311 (GQLGFPVSPTTVPLPSPKYKGH). Residues 240–249 (FPPPHPPPPS) show a composition bias toward pro residues. Over residues 290 to 302 (GQLGFPVSPTTVP) the composition is skewed to low complexity.

Interacts (via N-terminus) with WRKY8. Highly expressed in roots and at lower levels in rosette leaves, cauline leaves, stems, flowers and siliques.

The protein resides in the nucleus. Its function is as follows. Functions as a negative regulator of salt stress response. Functions as a repressor of WRKY8 transcription factor by decreasing the DNA-binding activity of WRKY8 and acts antagonistically with WRKY8 to regulate sodium and potassium homeostasis under salt stress. This chain is VQ motif-containing protein 9, found in Arabidopsis thaliana (Mouse-ear cress).